A 414-amino-acid chain; its full sequence is WW domain-containing oxidoreductase (414 aa).

The tract at residues 1–24 is disordered; the sequence is MAALRYAGLDDTDSEDELPPGWEE. T12 bears the Phosphothreonine mark. S14 bears the Phosphoserine mark. A WW 1 domain is found at 16–49; that stretch reads DELPPGWEERTTKDGWVYYANHTEEKTQWEHPKT. Y33 carries the post-translational modification Phosphotyrosine. The Nuclear localization signal motif lies at 50–55; it reads GKRKRV. A WW 2 domain is found at 57 to 90; the sequence is GDLPYGWEQGTDENGQVFFVDHINKRTTYLDPRL. Residues 125–414 form an interaction with MAPT region; the sequence is KVVVVTGANS…IQERLGSQSG (290 aa). 131-137 is an NADP(+) binding site; the sequence is GANSGIG. A mediates targeting to the mitochondria region spans residues 209 to 273; it reads CNAATFALPW…RFTDINDSLG (65 aa). Position 260 (S260) interacts with substrate. Position 287 is a phosphotyrosine; by TNK2 (Y287). Y293 acts as the Proton acceptor in catalysis.

The protein belongs to the short-chain dehydrogenases/reductases (SDR) family. In terms of assembly, interacts with TP53, p73/TP73 and MAPK8. Interacts with MAPT/TAU, RUNX2 and HYAL2. Forms a ternary complex with TP53 and MDM2. Interacts with ERBB4, LITAF and WBP1. Interacts with DVL1, DVL2 and DVL3. May interact with FAM189B and SCOTIN. Interacts with TNK2. Interacts with TMEM207. Interacts (via WW domain) with VOPP1. In terms of processing, phosphorylated upon genotoxic stress. Phosphorylation of Tyr-33 regulates interaction with TP53, TP73 and MAPK8. May also regulate proapoptotic activity. Phosphorylation by TNK2 is associated with polyubiquitination and degradation. Post-translationally, ubiquitinated when phosphorylated by TNK2, leading to its degradation.

It is found in the cytoplasm. The protein localises to the nucleus. It localises to the mitochondrion. The protein resides in the golgi apparatus. Its subcellular location is the lysosome. In terms of biological role, putative oxidoreductase. Acts as a tumor suppressor and plays a role in apoptosis. May function synergistically with p53/TP53 to control genotoxic stress-induced cell death. Plays a role in TGFB1 signaling and TGFB1-mediated cell death. May also play a role in tumor necrosis factor (TNF)-mediated cell death. Required for normal bone development. Inhibits Wnt signaling, probably by sequestering DVL2 in the cytoplasm. The polypeptide is WW domain-containing oxidoreductase (WWOX) (Pongo abelii (Sumatran orangutan)).